The following is a 508-amino-acid chain: Purine-cytosine permease fcyB (508 aa).

Topologically, residues methionine 1–asparagine 72 are cytoplasmic. A helical membrane pass occupies residues isoleucine 73–glycine 93. Residues lysine 94–alanine 104 lie on the Extracellular side of the membrane. Residues isoleucine 105–phenylalanine 125 traverse the membrane as a helical segment. At glycine 126 to glycine 147 the chain is on the cytoplasmic side. A helical membrane pass occupies residues phenylalanine 148–alanine 168. The Extracellular portion of the chain corresponds to glutamine 169–aspartate 177. A helical membrane pass occupies residues valine 178 to glycine 198. Over tyrosine 199–lysine 200 the chain is Cytoplasmic. Residues valine 201–leucine 221 traverse the membrane as a helical segment. Over glycine 222–glycine 243 the chain is Extracellular. A helical transmembrane segment spans residues serine 244–alanine 264. At aspartate 265 to lysine 278 the chain is on the cytoplasmic side. Residues isoleucine 279 to valine 299 form a helical membrane-spanning segment. Topologically, residues alanine 300 to glycine 323 are extracellular. Residues leucine 324–alanine 344 form a helical membrane-spanning segment. Residues leucine 345–arginine 374 are Cytoplasmic-facing. A helical transmembrane segment spans residues phenylalanine 375–histidine 395. Residues phenylalanine 396–methionine 404 lie on the Extracellular side of the membrane. Residues asparagine 405–phenylalanine 425 form a helical membrane-spanning segment. Residues lysine 426 to lysine 442 lie on the Cytoplasmic side of the membrane. A helical membrane pass occupies residues leucine 443–glycine 463. Residues methionine 464–alanine 477 lie on the Extracellular side of the membrane. Residues alanine 478–leucine 498 form a helical membrane-spanning segment. Over arginine 499–arginine 508 the chain is Cytoplasmic.

Belongs to the purine-cytosine permease (2.A.39) family.

It is found in the cell membrane. Functionally, this permease has a broad specificity towards purines, and also transports cytosine, but neither uracil nor thymine. Contributes very little in purine uptake. Its major role may be the uptake of cytosine. The chain is Purine-cytosine permease fcyB (fcyB) from Emericella nidulans (strain FGSC A4 / ATCC 38163 / CBS 112.46 / NRRL 194 / M139) (Aspergillus nidulans).